Here is a 67-residue protein sequence, read N- to C-terminus: MSPEITRETFENGPGEQTSLFHVDDCVKNHARLRKEYNLTKCPNCQRNIEKTPETADKSEQKALTDF.

This is an uncharacterized protein from Haloarcula hispanica (His1V).